We begin with the raw amino-acid sequence, 271 residues long: Structure-specific endonuclease subunit SLX1 (271 aa).

Positions 9–94 (RFFGVYLLYC…PQASRRLTHV (86 aa)) constitute a GIY-YIG domain. The SLX1-type zinc finger occupies 182–234 (CTLCARMLQDEEGPLCCPHPGCPLRAHIICLAEEFLQEEPGQLLPLEGHCPSC).

The protein belongs to the SLX1 family. As to quaternary structure, forms a heterodimer with SLX4. The cofactor is a divalent metal cation.

It localises to the nucleus. In terms of biological role, catalytic subunit of the SLX1-SLX4 structure-specific endonuclease that resolves DNA secondary structures generated during DNA repair and recombination. Has endonuclease activity towards branched DNA substrates, introducing single-strand cuts in duplex DNA close to junctions with ss-DNA. Has a preference for 5'-flap structures, and promotes symmetrical cleavage of static and migrating Holliday junctions (HJs). Resolves HJs by generating two pairs of ligatable, nicked duplex products. The polypeptide is Structure-specific endonuclease subunit SLX1 (Slx1b) (Rattus norvegicus (Rat)).